Here is a 240-residue protein sequence, read N- to C-terminus: Fatty acid metabolism regulator protein (240 aa).

Positions 6–74 (KGPASFAEKY…HGKPTRVNNF (69 aa)) constitute an HTH gntR-type domain. A DNA-binding region (H-T-H motif) is located at residues 34–53 (ERELSELIGVTRTTLREVLQ).

In terms of assembly, homodimer.

Its subcellular location is the cytoplasm. Functionally, multifunctional regulator of fatty acid metabolism. The chain is Fatty acid metabolism regulator protein from Shewanella amazonensis (strain ATCC BAA-1098 / SB2B).